Here is a 261-residue protein sequence, read N- to C-terminus: tRNA U34 carboxymethyltransferase (261 aa).

Carboxy-S-adenosyl-L-methionine-binding positions include Lys25, Trp39, Lys44, Gly63, 114 to 115 (VE), Tyr135, and Arg250.

Belongs to the class I-like SAM-binding methyltransferase superfamily. CmoB family. In terms of assembly, homotetramer.

It catalyses the reaction carboxy-S-adenosyl-L-methionine + 5-hydroxyuridine(34) in tRNA = 5-carboxymethoxyuridine(34) in tRNA + S-adenosyl-L-homocysteine + H(+). Catalyzes carboxymethyl transfer from carboxy-S-adenosyl-L-methionine (Cx-SAM) to 5-hydroxyuridine (ho5U) to form 5-carboxymethoxyuridine (cmo5U) at position 34 in tRNAs. The chain is tRNA U34 carboxymethyltransferase from Helicobacter pylori (strain P12).